We begin with the raw amino-acid sequence, 914 residues long: MINSLLTRLFGSRNERQLRQLNSIVAKINALEAELQKLSDTALQAKTTEFKQSIQDGKSLDKLLPEAFAVCREASRRVLGMRHYDVQLIGGMVLHLGKIAEMRTGEGKTLVATLPVYLNALAGKGVHVVTVNDYLARRDAAHMGRLYNWLGLSVGVVYPGMPHSDKHAAYGADITYGTNNEFGFDYLRDNMALSKADRYQRGLHYAIVDEVDSILIDEARTPLIISGPADESPDLYIRVNRIIPHLTRQENEEAEGDYWVDEKGKQVHLSEVGMERAEDLLRQAGILEEGDDSLYAAQNLSVVHHLNAALRAHALYQRDVDYIVRDGEVVIVDEFTGRTLAGRRWSDGLHQAIEAKEGVPVQRENQTLASITFQNLFRIYKKLSGMTGTADTEAYEFQSIYGLEVMVIPTNRPTVRKDYPDQVFLNRSSKFNAVLEDIKDCAKRGQPVLVGTTSIEISEMLSEHLRKARVKHEVLNAKQHEREATIVANAGLPGAVTIATNMAGRGTDIVLGGSLDTVLAELDPDATEEDRFRVKTAWNRRHEAVKAAGGLHIIGTERHESRRIDNQLRGRAGRQGDPGSSRFYLSLEDSLMRIFASEWVQKVMRLMGMKEGDVIEDRRVTRQIERAQRKVEAHNFDIRKNLLDYDDVNNEQRKVVYAQRDELLDAESIKENIDSIRHEVIDALVTRFVPEHSIDEQWDLPGLQATLQSEWGLHLPLIEMLKGREEVDAERIAFLVQDAVDKHCAEREASIGAETMRALEKHVMLTVLDQGWKEHLATMDYLRQGIHLRGYAQKQPKQEYKREAFELFSEMLEHVKREVIASLARVRIRSEEEMAALEEQERRQVDTLLRQSQFQHQEAGGYGTGDEAVSLQRQPAGQRAAIAQVIRDTPKVGRNDPCPCGSGKKYKHCHGLVT.

ATP-binding positions include Q87, 105 to 109 (GEGKT), and D508. Residues C898, C900, C909, and H910 each contribute to the Zn(2+) site.

Belongs to the SecA family. Monomer and homodimer. Part of the essential Sec protein translocation apparatus which comprises SecA, SecYEG and auxiliary proteins SecDF-YajC and YidC. It depends on Zn(2+) as a cofactor.

It localises to the cell inner membrane. The protein localises to the cytoplasm. The enzyme catalyses ATP + H2O + cellular proteinSide 1 = ADP + phosphate + cellular proteinSide 2.. In terms of biological role, part of the Sec protein translocase complex. Interacts with the SecYEG preprotein conducting channel. Has a central role in coupling the hydrolysis of ATP to the transfer of proteins into and across the cell membrane, serving both as a receptor for the preprotein-SecB complex and as an ATP-driven molecular motor driving the stepwise translocation of polypeptide chains across the membrane. This Xylella fastidiosa (strain M23) protein is Protein translocase subunit SecA.